Reading from the N-terminus, the 294-residue chain is Acetyl-coenzyme A carboxylase carboxyl transferase subunit beta (294 aa).

Residues 30–294 (IMTKCPECKK…PETGGESDGE (265 aa)) form the CoA carboxyltransferase N-terminal domain. Zn(2+)-binding residues include Cys-34, Cys-37, Cys-53, and Cys-56. Residues 34-56 (CPECKKIMYTKELQKNLMVCNYC) form a C4-type zinc finger.

The protein belongs to the AccD/PCCB family. As to quaternary structure, acetyl-CoA carboxylase is a heterohexamer composed of biotin carboxyl carrier protein (AccB), biotin carboxylase (AccC) and two subunits each of ACCase subunit alpha (AccA) and ACCase subunit beta (AccD). Requires Zn(2+) as cofactor.

The protein localises to the cytoplasm. It catalyses the reaction N(6)-carboxybiotinyl-L-lysyl-[protein] + acetyl-CoA = N(6)-biotinyl-L-lysyl-[protein] + malonyl-CoA. It participates in lipid metabolism; malonyl-CoA biosynthesis; malonyl-CoA from acetyl-CoA: step 1/1. In terms of biological role, component of the acetyl coenzyme A carboxylase (ACC) complex. Biotin carboxylase (BC) catalyzes the carboxylation of biotin on its carrier protein (BCCP) and then the CO(2) group is transferred by the transcarboxylase to acetyl-CoA to form malonyl-CoA. In Listeria welshimeri serovar 6b (strain ATCC 35897 / DSM 20650 / CCUG 15529 / CIP 8149 / NCTC 11857 / SLCC 5334 / V8), this protein is Acetyl-coenzyme A carboxylase carboxyl transferase subunit beta.